The sequence spans 394 residues: Elongation factor Tu (394 aa).

The region spanning 10–205 (KPHMNVGTIG…TMDSYFDLPE (196 aa)) is the tr-type G domain. A G1 region spans residues 19-26 (GHVDHGKT). 19-26 (GHVDHGKT) is a GTP binding site. Mg(2+) is bound at residue Thr26. The tract at residues 61–65 (GITIN) is G2. Positions 82–85 (DCPG) are G3. Residues 82–86 (DCPGH) and 137–140 (NKLD) contribute to the GTP site. Residues 137 to 140 (NKLD) are G4. A G5 region spans residues 173-175 (SAF).

It belongs to the TRAFAC class translation factor GTPase superfamily. Classic translation factor GTPase family. EF-Tu/EF-1A subfamily. In terms of assembly, monomer.

It is found in the cytoplasm. It carries out the reaction GTP + H2O = GDP + phosphate + H(+). GTP hydrolase that promotes the GTP-dependent binding of aminoacyl-tRNA to the A-site of ribosomes during protein biosynthesis. This chain is Elongation factor Tu, found in Borrelia hermsii (strain HS1 / DAH).